A 697-amino-acid polypeptide reads, in one-letter code: Envelope glycoprotein G (697 aa).

Positions 1-22 (MHAIAPRLLLLFVLSGLPGTRG) are cleaved as a signal peptide. The Virion surface portion of the chain corresponds to 23–648 (GSGVPGPINP…WFLTASPALD (626 aa)). 2 N-linked (GlcNAc...) asparagine; by host glycosylation sites follow: asparagine 104 and asparagine 163. 2 disordered regions span residues 298-389 (HWAP…TTPP) and 402-630 (TPEE…PSGP). Residues 322–335 (LRTDPEGVDPDVRA) show a composition bias toward basic and acidic residues. 2 stretches are compositionally biased toward low complexity: residues 375 to 389 (DPSAEPTAPATTTPP) and 402 to 445 (TPEE…AKTP). An N-linked (GlcNAc...) asparagine; by host glycan is attached at asparagine 435. Pro residues-rich tracts occupy residues 446–457 (PTTPAPTTPPPT) and 465–480 (PTTPGPQTTPPGPATP). The span at 481–529 (GPVGASAAPTADSPLTALPPATAPGPSAANVSVAATTATPGTRGTARTP) shows a compositional bias: low complexity. Asparagine 510 is a glycosylation site (N-linked (GlcNAc...) asparagine; by host). Pro residues predominate over residues 542 to 552 (DAPPGSPAPPP). Over residues 560–576 (EEFEGAGDGEPPEDDDS) the composition is skewed to acidic residues. The segment covering 587–603 (PNKPPPARPGPIRPTLP) has biased composition (pro residues). Residues 649–669 (ILFIISTTIHTAAFVCLVALA) form a helical membrane-spanning segment. Over 670-697 (AQLWRGRAGRRRYAHPSVRYVCLPPERD) the chain is Intravirion.

The protein belongs to the alphaherpesvirinae glycoprotein G family.

It localises to the virion membrane. In terms of biological role, chemokine-binding protein that inhibits neutrophils' chemotaxis. The protein is Envelope glycoprotein G (gG) of Homo sapiens (Human).